Reading from the N-terminus, the 964-residue chain is Isoleucine--tRNA ligase (964 aa).

Residues 66–76 carry the 'HIGH' region motif; the sequence is PYANGDIHIGH. Glu-596 provides a ligand contact to L-isoleucyl-5'-AMP. The 'KMSKS' region signature appears at 637–641; that stretch reads KMSKS. Lys-640 contacts ATP. Zn(2+)-binding residues include Cys-927, Cys-930, Cys-947, and Cys-950.

The protein belongs to the class-I aminoacyl-tRNA synthetase family. IleS type 1 subfamily. Monomer. It depends on Zn(2+) as a cofactor.

It localises to the cytoplasm. It catalyses the reaction tRNA(Ile) + L-isoleucine + ATP = L-isoleucyl-tRNA(Ile) + AMP + diphosphate. In terms of biological role, catalyzes the attachment of isoleucine to tRNA(Ile). As IleRS can inadvertently accommodate and process structurally similar amino acids such as valine, to avoid such errors it has two additional distinct tRNA(Ile)-dependent editing activities. One activity is designated as 'pretransfer' editing and involves the hydrolysis of activated Val-AMP. The other activity is designated 'posttransfer' editing and involves deacylation of mischarged Val-tRNA(Ile). The protein is Isoleucine--tRNA ligase of Cupriavidus necator (strain ATCC 17699 / DSM 428 / KCTC 22496 / NCIMB 10442 / H16 / Stanier 337) (Ralstonia eutropha).